Here is a 363-residue protein sequence, read N- to C-terminus: UDP-N-acetylglucosamine--N-acetylmuramyl-(pentapeptide) pyrophosphoryl-undecaprenol N-acetylglucosamine transferase (363 aa).

UDP-N-acetyl-alpha-D-glucosamine-binding positions include 7–9 (TGG), Asn-125, Ser-196, Ile-251, and Gln-296.

Belongs to the glycosyltransferase 28 family. MurG subfamily.

It is found in the cell membrane. It carries out the reaction Mur2Ac(oyl-L-Ala-gamma-D-Glu-L-Lys-D-Ala-D-Ala)-di-trans,octa-cis-undecaprenyl diphosphate + UDP-N-acetyl-alpha-D-glucosamine = beta-D-GlcNAc-(1-&gt;4)-Mur2Ac(oyl-L-Ala-gamma-D-Glu-L-Lys-D-Ala-D-Ala)-di-trans,octa-cis-undecaprenyl diphosphate + UDP + H(+). It functions in the pathway cell wall biogenesis; peptidoglycan biosynthesis. Functionally, cell wall formation. Catalyzes the transfer of a GlcNAc subunit on undecaprenyl-pyrophosphoryl-MurNAc-pentapeptide (lipid intermediate I) to form undecaprenyl-pyrophosphoryl-MurNAc-(pentapeptide)GlcNAc (lipid intermediate II). The chain is UDP-N-acetylglucosamine--N-acetylmuramyl-(pentapeptide) pyrophosphoryl-undecaprenol N-acetylglucosamine transferase from Latilactobacillus sakei subsp. sakei (strain 23K) (Lactobacillus sakei subsp. sakei).